We begin with the raw amino-acid sequence, 2530 residues long: Cullin-9 (2530 aa).

Lys-87 participates in a covalent cross-link: Glycyl lysine isopeptide (Lys-Gly) (interchain with G-Cter in ubiquitin). One can recognise a CPH domain in the interval 367–440 (RSEFSSRSGY…HWHMLEILGP (74 aa)). Disordered regions lie at residues 585–639 (LPSS…KAQS) and 930–951 (RGSP…GSPE). Positions 940 to 949 (TPSTQGQDGS) are enriched in polar residues. Ser-978 carries the post-translational modification Phosphoserine. The region spanning 1145 to 1324 (PITIPFFDVF…RTCLFYTIRA (180 aa)) is the DOC domain. ATP is bound at residue 1365-1372 (AAQALGKT). 2 disordered regions span residues 1435-1468 (EAPP…TPVC) and 1667-1690 (GDQE…GREL). The residue at position 1459 (Ser-1459) is a Phosphoserine. Lys-1884 is covalently cross-linked (Glycyl lysine isopeptide (Lys-Gly) (interchain with G-Cter in NEDD8)). Residues 2070–2287 (RPDQCPVCVT…KDYYNCSAMV (218 aa)) are TRIAD supradomain. Zn(2+) is bound by residues Cys-2074, Cys-2077, Cys-2092, His-2094, Cys-2097, Cys-2100, Cys-2119, Cys-2124, Cys-2164, Cys-2170, Cys-2185, Cys-2188, Cys-2193, Cys-2196, His-2202, Cys-2207, Cys-2240, and Cys-2243. The RING-type 1 zinc-finger motif lies at 2074–2124 (CPVCVTPLGPHDDSPSLCCLHCCCKSCWNEYLTTRIEQNFVLNCTCPIADC). The segment at 2144 to 2207 (SKYEKALLRG…FPEAHYPASC (64 aa)) adopts an IBR-type zinc-finger fold. Residues 2240–2269 (CPSCQAPIEKNEGCLHMTCARCNHGFCWRC) form an RING-type 2; atypical zinc finger. Residue Cys-2253 is part of the active site. Zn(2+) is bound by residues Cys-2258, Cys-2261, Cys-2266, Cys-2269, His-2277, and Cys-2283. At Ser-2440 the chain carries Phosphoserine. The interval 2443–2530 (VETREVKGSN…DEDEDDESYD (88 aa)) is disordered. Residues 2452 to 2462 (NVPSDQPQGSS) are compositionally biased toward polar residues. Residues 2459 to 2500 (QGSSGLEVEDEEEEEEEEEEEEEEEEEDVPEWQHEFDEELDN) are a coiled coil. Acidic residues-rich tracts occupy residues 2465 to 2510 (EVED…EESE) and 2520 to 2530 (GDEDEDDESYD).

Belongs to the cullin family. Component of a Cul9-RING complex consisting of CUL9 and RBX1; the CUL9-RBX1 complex is a heterododecamer composed of six CUL9 and six RBX1 protomers. Interacts (via C-terminal TRIAD/RBR supradomain) with E2 ubiquitin-conjugating enzyme UBE2L3. Interacts with CUL7; the interaction with the CUL7 component of the 3M complex leads to inhibition of CUL9 activity. The CUL7-CUL9 heterodimer seems to interact specifically with TP53, likely via the CPH domain. Forms a complex with p53/TP53 in the cytoplasm of unstressed cells. Interacts with UBCH7 and UBCH8. Autoubiquitinated by the CUL9-RBX1 complex at Lys-87. Post-translationally, neddylated. Neddylation is mediated by E1 enzyme UBA3-NAE1 complex and E2 enzyme UBE2F. Structural rearrangment of the C-terminal TRIAD/RBR supradomain may play a role in neddylation and deneddylation.

It is found in the cytoplasm. Core component of the Cul9-RING ubiquitin-protein ligase complex composed of CUL9 and RBX1. The CUL9-RBX1 complex mediates ubiquitination and subsequent degradation of BIRC5 and is required to maintain microtubule dynamics and genome integrity. Acts downstream of the 3M complex, which inhibits CUL9 activity and the ubiquitination of BIRC5. The CUL9-RBX1 complex also mediates mono-ubiquitination of p53/TP53. Acts as a cytoplasmic anchor protein in p53/TP53-associated protein complex. Regulates the subcellular localization of p53/TP53 and its subsequent function. Ubiquitinates apurinic/apyrimidinic endodeoxyribonuclease APEX2. Ubiquitination by the CUL9-RBX1 complex is predominantly mediated by E2 ubiquitin-conjugating enzymes UBE2L3 and UBE2D2. This chain is Cullin-9 (Cul9), found in Mus musculus (Mouse).